Reading from the N-terminus, the 162-residue chain is Caveolin-2 (162 aa).

Topologically, residues 1-86 are cytoplasmic; it reads MGLETEKTDV…FEISKYVMYK (86 aa). Phosphotyrosine; by SRC is present on Y19. A phosphoserine mark is found at S20 and S23. Y27 is subject to Phosphotyrosine; by SRC. A Phosphoserine modification is found at S36. An intramembrane region (helical) is located at residues 87–107; the sequence is FLTVFLAIPLAFLAGILFATL. At 108–162 the chain is on the cytoplasmic side; that stretch reads SCLHIWIIMPFVKTCLMVLPSVQTIWKSVTDAIVAPLCTSIGRSFSSVSLQLSQD.

The protein belongs to the caveolin family. Monomer or homodimer. Interacts with CAV1; the interaction forms a stable heterooligomeric complex that is required for targeting to lipid rafts and for caveolae formation. Tyrosine phosphorylated forms do not form heterooligomers with the Tyr-19-phosphorylated form existing as a monomer or dimer, and the Tyr-27-form as a monomer only. Interacts (tyrosine phosphorylated form) with the SH2 domain-containing proteins, RASA1, NCK1 and SRC. Interacts (tyrosine phosphorylated form) with INSR, the interaction (Tyr-27-phosphorylated form) is increased on insulin stimulation. Interacts (Tyr-19 phosphorylated form) with MAPK1 (phosphorylated form); the interaction, promoted by insulin, leads to nuclear location and MAPK1 activation. Interacts with STAT3; the interaction is increased on insulin-induced tyrosine phosphorylation leading to STAT activation. Phosphorylated on serine and tyrosine residues. CAV1 promotes phosphorylation on Ser-23 which then targets the complex to the plasma membrane, lipid rafts and caveolae. Phosphorylation on Ser-36 appears to modulate mitosis in endothelial cells. Phosphorylation on both Tyr-19 and Tyr-27 is required for insulin-induced 'Ser-727' phosphorylation of STAT3 and its activation. Phosphorylation on Tyr-19 is required for insulin-induced phosphorylation of MAPK1 and DNA binding of STAT3. Tyrosine phosphorylation is induced by both EGF and insulin (By. similarity).

The protein localises to the nucleus. It is found in the cytoplasm. Its subcellular location is the golgi apparatus membrane. It localises to the cell membrane. The protein resides in the membrane. The protein localises to the caveola. May act as a scaffolding protein within caveolar membranes. Interacts directly with G-protein alpha subunits and can functionally regulate their activity. Acts as an accessory protein in conjunction with CAV1 in targeting to lipid rafts and driving caveolae formation. The Ser-36 phosphorylated form has a role in modulating mitosis in endothelial cells. Positive regulator of cellular mitogenesis of the MAPK signaling pathway. Required for the insulin-stimulated nuclear translocation and activation of MAPK1 and STAT3, and the subsequent regulation of cell cycle progression. The sequence is that of Caveolin-2 (CAV2) from Aotus nancymaae (Ma's night monkey).